Here is a 252-residue protein sequence, read N- to C-terminus: Ribosome assembly factor mrt4 (252 aa).

This sequence belongs to the universal ribosomal protein uL10 family. In terms of assembly, associates with the pre-60S ribosomal particle.

The protein resides in the nucleus. It localises to the nucleolus. Its subcellular location is the cytoplasm. In terms of biological role, component of the ribosome assembly machinery. Nuclear paralog of the ribosomal protein P0, it binds pre-60S subunits at an early stage of assembly in the nucleolus, and is replaced by P0 in cytoplasmic pre-60S subunits and mature 80S ribosomes. The sequence is that of Ribosome assembly factor mrt4 from Neurospora crassa (strain ATCC 24698 / 74-OR23-1A / CBS 708.71 / DSM 1257 / FGSC 987).